A 191-amino-acid polypeptide reads, in one-letter code: ECF RNA polymerase sigma factor ShbA (191 aa).

Residues 27–98 (LLAHVHPLAL…HKVADLQRAA (72 aa)) are sigma-70 factor domain-2. The tract at residues 100-122 (RHPGSTAVPSDEMPERPDDSLGP) is disordered. The segment covering 112–122 (MPERPDDSLGP) has biased composition (basic and acidic residues). The tract at residues 138–187 (LLANLPENQRELLVLRVAVGLTAEETGQMLGMSPGAVRVAQHRALSRLRA) is sigma-70 factor domain-4. The H-T-H motif DNA-binding region spans 160 to 179 (AEETGQMLGMSPGAVRVAQH).

Belongs to the sigma-70 factor family. ECF subfamily.

In terms of biological role, sigma factors are initiation factors that promote the attachment of RNA polymerase to specific initiation sites and are then released. Extracytoplasmic function (ECF) sigma factors are held in an inactive form by an anti-sigma factor until released. This alternative sigma factor governs the transcription of the principal sigma factor HrdB (SigA) throughout growth. Acts by binding to the promoter region. The chain is ECF RNA polymerase sigma factor ShbA from Streptomyces griseus subsp. griseus (strain JCM 4626 / CBS 651.72 / NBRC 13350 / KCC S-0626 / ISP 5235).